Consider the following 121-residue polypeptide: Heme-degrading monooxygenase (121 aa).

One can recognise an ABM domain in the interval 2-101 (IIVTNTIKVE…EQREDRKGIV (100 aa)). Position 6 (Asn6) interacts with Fe cation. The disordered stretch occupies residues 76-98 (KSDSFKKAHGRTKDTREQREDRK). Residues 78 to 98 (DSFKKAHGRTKDTREQREDRK) are compositionally biased toward basic and acidic residues. Residue His84 coordinates heme.

The protein belongs to the antibiotic biosynthesis monooxygenase family. Heme-degrading monooxygenase IsdG subfamily. In terms of assembly, homodimer.

Its subcellular location is the cytoplasm. It carries out the reaction heme b + 3 reduced [NADPH--hemoprotein reductase] + 3 O2 = biliverdin IXalpha + CO + Fe(2+) + 3 oxidized [NADPH--hemoprotein reductase] + 3 H2O + H(+). Allows bacterial pathogens to use the host heme as an iron source. Catalyzes the oxidative degradation of the heme macrocyclic porphyrin ring to the biliverdin in the presence of a suitable electron donor such as ascorbate or NADPH--cytochrome P450 reductase, with subsequent release of free iron. This chain is Heme-degrading monooxygenase, found in Listeria welshimeri serovar 6b (strain ATCC 35897 / DSM 20650 / CCUG 15529 / CIP 8149 / NCTC 11857 / SLCC 5334 / V8).